Consider the following 388-residue polypeptide: Succinyl-diaminopimelate desuccinylase (388 aa).

Residue H74 participates in Zn(2+) binding. D76 is a catalytic residue. D107 is a Zn(2+) binding site. The active-site Proton acceptor is E142. Zn(2+)-binding residues include E143, E171, and H360.

This sequence belongs to the peptidase M20A family. DapE subfamily. In terms of assembly, homodimer. Requires Zn(2+) as cofactor. It depends on Co(2+) as a cofactor.

The catalysed reaction is N-succinyl-(2S,6S)-2,6-diaminopimelate + H2O = (2S,6S)-2,6-diaminopimelate + succinate. It functions in the pathway amino-acid biosynthesis; L-lysine biosynthesis via DAP pathway; LL-2,6-diaminopimelate from (S)-tetrahydrodipicolinate (succinylase route): step 3/3. In terms of biological role, catalyzes the hydrolysis of N-succinyl-L,L-diaminopimelic acid (SDAP), forming succinate and LL-2,6-diaminopimelate (DAP), an intermediate involved in the bacterial biosynthesis of lysine and meso-diaminopimelic acid, an essential component of bacterial cell walls. In Rhodopseudomonas palustris (strain BisB5), this protein is Succinyl-diaminopimelate desuccinylase.